Consider the following 622-residue polypeptide: WD repeat-containing protein 70 (622 aa).

The segment covering 37–55 (TAVERSKKTLEAREKEEQI) has biased composition (basic and acidic residues). Residues 37–141 (TAVERSKKTL…DNPVKGIPDS (105 aa)) are disordered. Residues 67 to 84 (SSSRQKNTDTSSSSSGSE) are compositionally biased toward low complexity. Over residues 120-132 (SDDEDEEQHEDDD) the composition is skewed to acidic residues. WD repeat units lie at residues 148 to 187 (HGTK…ASLQ), 195 to 236 (CECH…ECVK), 249 to 289 (GHTA…KHKG), 298 to 337 (GKRV…HTKF), 344 to 383 (TPGT…NPLN), 389 to 434 (ANYF…KVYE), and 437 to 476 (VTEA…QRGA). The span at 508–533 (REPRQRSTRKQLEKDRLDPVKSHKPE) shows a compositional bias: basic and acidic residues. Disordered stretches follow at residues 508 to 549 (REPR…GTHG) and 602 to 622 (AEVE…KRKI). The span at 539 to 549 (PGRGGRVGTHG) shows a compositional bias: gly residues. Positions 604–614 (VESDEEETDNE) are enriched in acidic residues.

The protein belongs to the WD repeat GAD-1 family.

This Xenopus tropicalis (Western clawed frog) protein is WD repeat-containing protein 70 (wdr70).